Reading from the N-terminus, the 472-residue chain is Ribulose bisphosphate carboxylase/oxygenase activase, chloroplastic (472 aa).

The transit peptide at 1-58 directs the protein to the chloroplast; sequence MATAVSTVGAATRAPLNLNGSSAGASVPTSGFLGSSLKKHTNVRFPSSSRTTSMTVKA. Residue 163-170 participates in ATP binding; the sequence is GGKGQGKS. The tract at residues 448 to 472 is disordered; it reads GCTDPEAKNYDPTARSDDGSCTYNL. Residues 452–465 show a composition bias toward basic and acidic residues; it reads PEAKNYDPTARSDD.

This sequence belongs to the RuBisCO activase family.

The protein localises to the plastid. It localises to the chloroplast stroma. Functionally, activation of RuBisCO (ribulose-1,5-bisphosphate carboxylase/oxygenase; EC 4.1.1.39) involves the ATP-dependent carboxylation of the epsilon-amino group of lysine leading to a carbamate structure. The chain is Ribulose bisphosphate carboxylase/oxygenase activase, chloroplastic from Spinacia oleracea (Spinach).